The chain runs to 476 residues: Protein transport protein Sec61 subunit alpha isoform 2 (476 aa).

At 1–32 the chain is on the cytoplasmic side; that stretch reads MGIKFLEVIKPFCAVLPEIQKPERKIQFREKV. The helical transmembrane segment at 33-53 threads the bilayer; it reads LWTAITLFIFLVCCQIPLFGI. The Lumenal segment spans residues 54 to 75; sequence MSSDSADPFYWMRVILASNRGT. A helical transmembrane segment spans residues 76–96; sequence LMELGISPIVTSGLIMQLLAG. The Cytoplasmic segment spans residues 97 to 117; sequence AKIIEVGDTPKDRALFNGAQK. Residues 118–138 form a helical membrane-spanning segment; the sequence is LFGMIITIGQAIVYVMTGMYG. Topologically, residues 139–144 are lumenal; sequence DPAEMG. Residues 145-165 form a helical membrane-spanning segment; it reads AGICLLIIIQLFVAGLIVLLL. The Cytoplasmic segment spans residues 166–172; that stretch reads DELLQKG. The chain crosses the membrane as a helical span at residues 173–193; that stretch reads YGLGSGISLFIATNICETIVW. Topologically, residues 194 to 240 are lumenal; it reads KASSPTTINTGRGTEFEGAVIALFHLLATRTDKVRALREAFYRQNLP. The helical transmembrane segment at 241–261 threads the bilayer; the sequence is NLMNLIATVFVFAVVIYFQGF. Over 262–288 the chain is Cytoplasmic; the sequence is RVDLPIKSARYRGQYSSYPIKLFYTSN. A helical membrane pass occupies residues 289-309; that stretch reads IPIILQSALVSNLYVISQMLS. At 310 to 353 the chain is on the lumenal side; sequence VRFSGNFLVNLLGQWADVSGGGPARSYPVGGLCYYLSPPESMGA. Residues 354–374 traverse the membrane as a helical segment; the sequence is ILEDPVHVVVYIIFMLGSCAF. Residues 375–420 lie on the Cytoplasmic side of the membrane; it reads FSKTWIEVSGSSAKDVAKQLKEQQMVMRGHRDTSMVHELNRYIPTA. The next 2 membrane-spanning stretches (helical) occupy residues 421–441 and 442–462; these read AAFG…LGAI and GSGT…EIFV. The Cytoplasmic portion of the chain corresponds to 463–476; sequence KEQAEVGGMGALFF.

It belongs to the SecY/SEC61-alpha family. The SEC61 channel-forming translocon complex consists of channel-forming core components SEC61A1, SEC61B and SEC61G and different auxiliary components such as SEC62 and SEC63.

The protein localises to the endoplasmic reticulum membrane. In terms of biological role, component of SEC61 channel-forming translocon complex that mediates transport of signal peptide-containing precursor polypeptides across the endoplasmic reticulum (ER). Forms a ribosome receptor and a gated pore in the ER membrane, both functions required for cotranslational translocation of nascent polypeptides. This Pongo abelii (Sumatran orangutan) protein is Protein transport protein Sec61 subunit alpha isoform 2 (SEC61A2).